The chain runs to 282 residues: Phosphatidylglycerol--prolipoprotein diacylglyceryl transferase (282 aa).

3 helical membrane passes run 19–39 (IGPF…VFGW), 58–78 (ISLV…ILGG), and 104–124 (GGMS…WFAY). Position 149 (R149) interacts with a 1,2-diacyl-sn-glycero-3-phospho-(1'-sn-glycerol). The next 3 helical transmembrane spans lie at 190-210 (AGME…LGAL), 214-234 (GMIL…GEHF), and 250-270 (MGML…VLAI).

This sequence belongs to the Lgt family.

It localises to the cell inner membrane. It catalyses the reaction L-cysteinyl-[prolipoprotein] + a 1,2-diacyl-sn-glycero-3-phospho-(1'-sn-glycerol) = an S-1,2-diacyl-sn-glyceryl-L-cysteinyl-[prolipoprotein] + sn-glycerol 1-phosphate + H(+). It functions in the pathway protein modification; lipoprotein biosynthesis (diacylglyceryl transfer). Catalyzes the transfer of the diacylglyceryl group from phosphatidylglycerol to the sulfhydryl group of the N-terminal cysteine of a prolipoprotein, the first step in the formation of mature lipoproteins. The sequence is that of Phosphatidylglycerol--prolipoprotein diacylglyceryl transferase from Bradyrhizobium diazoefficiens (strain JCM 10833 / BCRC 13528 / IAM 13628 / NBRC 14792 / USDA 110).